Reading from the N-terminus, the 356-residue chain is GMP reductase (356 aa).

Residues 26–27 (SR), Lys-78, 132–134 (DVA), and 183–184 (IG) each bind NADP(+). Residues Gly-184, Gly-186, and Cys-189 each contribute to the K(+) site. Cys-189 acts as the Thioimidate intermediate in catalysis. Thr-191 functions as the Proton donor/acceptor in the catalytic mechanism. Arg-192 serves as a coordination point for K(+). Residues 222–224 (DGG), 245–246 (GG), 271–273 (GMS), and 289–293 (RASEG) contribute to the GMP site. Residues Met-272, 288 to 289 (YR), and 317 to 320 (SACT) each bind NADP(+).

It belongs to the IMPDH/GMPR family.

The catalysed reaction is IMP + NH4(+) + NADP(+) = GMP + NADPH + 2 H(+). In terms of biological role, catalyzes the irreversible NADPH-dependent deamination of GMP to IMP. It functions in the conversion of nucleobase, nucleoside and nucleotide derivatives of G to A nucleotides, and in maintaining the intracellular balance of A and G nucleotides. This is GMP reductase from Ascaris suum (Pig roundworm).